The chain runs to 106 residues: Cell division protein FtsB (106 aa).

At 1 to 3 (MGK) the chain is on the cytoplasmic side. Residues 4–21 (LTLLLLVLLGWLQYSLWL) form a helical membrane-spanning segment. Over 22–106 (GKNGIHDYVR…SRPSTPNNTQ (85 aa)) the chain is Periplasmic. Residues 29-70 (YVRVKNDVAMQERNNSKLKARNDQLSAEIDDLTGGQEAIEER) adopt a coiled-coil conformation.

It belongs to the FtsB family. Part of a complex composed of FtsB, FtsL and FtsQ.

It is found in the cell inner membrane. Its function is as follows. Essential cell division protein. May link together the upstream cell division proteins, which are predominantly cytoplasmic, with the downstream cell division proteins, which are predominantly periplasmic. The sequence is that of Cell division protein FtsB from Photorhabdus laumondii subsp. laumondii (strain DSM 15139 / CIP 105565 / TT01) (Photorhabdus luminescens subsp. laumondii).